The chain runs to 302 residues: Sulfate adenylyltransferase subunit 2 (302 aa).

Belongs to the PAPS reductase family. CysD subfamily. In terms of assembly, heterodimer composed of CysD, the smaller subunit, and CysN.

The enzyme catalyses sulfate + ATP + H(+) = adenosine 5'-phosphosulfate + diphosphate. The protein operates within sulfur metabolism; hydrogen sulfide biosynthesis; sulfite from sulfate: step 1/3. Functionally, with CysN forms the ATP sulfurylase (ATPS) that catalyzes the adenylation of sulfate producing adenosine 5'-phosphosulfate (APS) and diphosphate, the first enzymatic step in sulfur assimilation pathway. APS synthesis involves the formation of a high-energy phosphoric-sulfuric acid anhydride bond driven by GTP hydrolysis by CysN coupled to ATP hydrolysis by CysD. The chain is Sulfate adenylyltransferase subunit 2 from Proteus mirabilis (strain HI4320).